We begin with the raw amino-acid sequence, 97 residues long: U6-theraphotoxin-Hhn1a 3 (97 aa).

The N-terminal stretch at 1-33 (MLIKQFSRRSKNTKVQILLAFAALFVLAVGSYA) is a signal peptide. A propeptide spanning residues 34 to 61 (SESKKLDLRDALFSAMFSADYQLNPQER) is cleaved from the precursor. Intrachain disulfides connect Cys-63–Cys-77, Cys-70–Cys-82, and Cys-76–Cys-89.

Belongs to the neurotoxin 10 (Hwtx-1) family. 12 (Hntx-12) subfamily. As to expression, expressed by the venom gland.

Its subcellular location is the secreted. Functionally, ion channel inhibitor. This chain is U6-theraphotoxin-Hhn1a 3, found in Cyriopagopus hainanus (Chinese bird spider).